The following is a 381-amino-acid chain: Putative MgpC-like protein MPN_503 (381 aa).

Positions methionine 1 to serine 109 are disordered. Positions glutamate 13–proline 31 are enriched in polar residues. Composition is skewed to basic and acidic residues over residues lysine 40–asparagine 51 and aspartate 61–glycine 73. The span at valine 89–serine 109 shows a compositional bias: polar residues.

The protein belongs to the MgpC family.

This chain is Putative MgpC-like protein MPN_503, found in Mycoplasma pneumoniae (strain ATCC 29342 / M129 / Subtype 1) (Mycoplasmoides pneumoniae).